Here is a 231-residue protein sequence, read N- to C-terminus: Cytochrome c oxidase assembly factor 7A (231 aa).

Sel1-like repeat units lie at residues 34-66, 68-104, 108-145, 146-182, and 183-218; these read PDGCNRLAEYFENIKKNFESAAGILKINCDQNE, SESFYKLGAYYVTGKGGLPVDLKAAYSCFLKSCNKGG, IDSCHNVGLLAHDGRVNDEKADAVTARDYYNKACDGNF, AASCFNLSATYLQGAPGIPKDMNKALHFSEKACSLGH, and VWGCANASRMYKLGDGVAKNDEKAESLKNRARDLHK.

The protein belongs to the hcp beta-lactamase family.

It localises to the mitochondrion intermembrane space. Its function is as follows. May be required for assembly of mitochondrial respiratory chain complexes. The protein is Cytochrome c oxidase assembly factor 7A (coa7-a) of Xenopus laevis (African clawed frog).